Here is a 329-residue protein sequence, read N- to C-terminus: MVKVAINGFGRIGRLVLRIALQRKALEVVAVNDPFISVDYAAYMFKYDSTHGRYKGEVTTSGNDLVIDGHKIAVFQEKDPANLPWGKLGVDIVIDSTGVFKELDSAQKHLDAGAKKVVITAPSKTAPMFVVGVNEDKYNGETIVSNASCTTNCLAPIAKIINDEFGIDEALMTTVHSITATQKTVDGPSHKDWRGGRTASGNIIPSSTGAAKAVGKVLPELQGKLTGMAFRVPTVDVSVVDLTVKLAKEATYDEIKAAVKKASQGKLKNVVGYTEDSVVSSDFLGDTHSTIFDASAGIQLSPKFVKVVAWYDNEYGYSERVVDLVEHVA.

NAD(+) is bound by residues Arg-11–Ile-12, Asp-33, and Lys-78. D-glyceraldehyde 3-phosphate is bound by residues Ser-148 to Thr-150, Thr-179, Thr-208 to Gly-209, and Arg-231. Cys-149 serves as the catalytic Nucleophile. Residue Asn-313 participates in NAD(+) binding.

Belongs to the glyceraldehyde-3-phosphate dehydrogenase family. As to quaternary structure, homotetramer.

Its subcellular location is the cytoplasm. The catalysed reaction is D-glyceraldehyde 3-phosphate + phosphate + NAD(+) = (2R)-3-phospho-glyceroyl phosphate + NADH + H(+). It functions in the pathway carbohydrate degradation; glycolysis; pyruvate from D-glyceraldehyde 3-phosphate: step 1/5. This chain is Glyceraldehyde-3-phosphate dehydrogenase 1 (GAP1), found in Kluyveromyces lactis (strain ATCC 8585 / CBS 2359 / DSM 70799 / NBRC 1267 / NRRL Y-1140 / WM37) (Yeast).